A 336-amino-acid polypeptide reads, in one-letter code: Ornithine carbamoyltransferase, catabolic (336 aa).

Carbamoyl phosphate is bound by residues 57–60 (STRT), glutamine 84, arginine 108, and 136–139 (HPTQ). L-ornithine-binding positions include asparagine 169, aspartate 233, and 237 to 238 (SM). Residues 275–276 (CL) and arginine 322 each bind carbamoyl phosphate.

The protein belongs to the aspartate/ornithine carbamoyltransferase superfamily. OTCase family.

The protein localises to the cytoplasm. The enzyme catalyses carbamoyl phosphate + L-ornithine = L-citrulline + phosphate + H(+). It functions in the pathway amino-acid degradation; L-arginine degradation via ADI pathway; carbamoyl phosphate from L-arginine: step 2/2. In terms of biological role, reversibly catalyzes the transfer of the carbamoyl group from carbamoyl phosphate (CP) to the N(epsilon) atom of ornithine (ORN) to produce L-citrulline. The polypeptide is Ornithine carbamoyltransferase, catabolic (Chromobacterium violaceum (strain ATCC 12472 / DSM 30191 / JCM 1249 / CCUG 213 / NBRC 12614 / NCIMB 9131 / NCTC 9757 / MK)).